We begin with the raw amino-acid sequence, 68 residues long: Phycobilisome 7.8 kDa linker polypeptide, allophycocyanin-associated, core (68 aa).

In terms of domain architecture, CpcD-like spans 2–57 (SRLFKITALVPSLSRTRTQRELQNTYFTKLVPYENWFREQQRIQKAGGKIIKVELA).

It belongs to the phycobilisome linker protein family.

The protein localises to the cellular thylakoid membrane. In terms of biological role, rod linker protein, associated with allophycocyanin. Linker polypeptides determine the state of aggregation and the location of the disk-shaped phycobiliprotein units within the phycobilisome and modulate their spectroscopic properties in order to mediate a directed and optimal energy transfer. The polypeptide is Phycobilisome 7.8 kDa linker polypeptide, allophycocyanin-associated, core (apcC) (Nostoc sp. (strain PCC 7120 / SAG 25.82 / UTEX 2576)).